The sequence spans 394 residues: Tubby-like F-box protein 2 (394 aa).

Positions 21–44 are disordered; sequence SKRSWSKSSHIAPDQTTPPLDNIP. The span at 26–44 shows a compositional bias: polar residues; the sequence is SKSSHIAPDQTTPPLDNIP. In terms of domain architecture, F-box spans 46–101; the sequence is SPWASLPPELLHDIIWRVEESETAWPARAAVVSCASVCKSWRGITMEIVRIPEQCG. Disordered regions lie at residues 200-225 and 268-297; these read ASST…PTNS and IEEE…PSLR.

This sequence belongs to the TUB family. In terms of tissue distribution, ubiquitous.

In Arabidopsis thaliana (Mouse-ear cress), this protein is Tubby-like F-box protein 2.